Here is a 722-residue protein sequence, read N- to C-terminus: Inactive serine protease PAMR1 (722 aa).

Residues 1–21 form the signal peptide; sequence MALLVWSSLVVASLHLLGTAA. Asn98 carries an N-linked (GlcNAc...) asparagine glycan. 8 disulfide bridges follow: Cys130–Cys152, Cys179–Cys201, Cys241–Cys252, Cys246–Cys262, Cys264–Cys273, Cys282–Cys331, Cys317–Cys344, and Cys416–Cys444. A CUB domain is found at 130–238; sequence CGEVIQAARG…DGFYVTFEEV (109 aa). The 38-residue stretch at 237 to 274 folds into the EGF-like domain; sequence EVTGCSSTPCFHDGTCIADKTGSYRCACLAGYTGRHCE. 2 consecutive Sushi domains span residues 280 to 346 and 393 to 446; these read KSCK…VCIK and KPAL…SCIP. N-linked (GlcNAc...) asparagine glycosylation is present at Asn318. A Peptidase S1 domain is found at 447–722; sequence ICGKLENFNI…FKEWLEKNMK (276 aa). Asn455 carries N-linked (GlcNAc...) asparagine glycosylation. Cys491 and Cys507 are joined by a disulfide. N-linked (GlcNAc...) asparagine glycosylation occurs at Asn616. Cystine bridges form between Cys632–Cys651 and Cys663–Cys699.

The protein belongs to the peptidase S1 family.

It localises to the secreted. In terms of biological role, may play a role in regeneration of skeletal muscle. This chain is Inactive serine protease PAMR1 (pamr1), found in Xenopus tropicalis (Western clawed frog).